The following is a 324-amino-acid chain: Putative transport protein TM_1187 (324 aa).

8 helical membrane passes run 12–32 (LYLV…TALI), 62–82 (ISNV…FPVI), 105–125 (IPGW…EGAL), 131–151 (IVGY…TAFI), 190–210 (GGQV…AFIF), 227–247 (FVPY…AFSV), 252–272 (GLLI…WVLA), and 285–305 (FIIL…GVLI).

The protein belongs to the autoinducer-2 exporter (AI-2E) (TC 2.A.86) family.

It is found in the cell membrane. The polypeptide is Putative transport protein TM_1187 (Thermotoga maritima (strain ATCC 43589 / DSM 3109 / JCM 10099 / NBRC 100826 / MSB8)).